We begin with the raw amino-acid sequence, 420 residues long: Vasopressin V1a receptor (420 aa).

Residues 1–20 (MSFPRGSYDPAASNSSPWWP) are disordered. Residues 1-54 (MSFPRGSYDPAASNSSPWWPLSAEDANSSWEAAGHQKGSDPSGDVRNEELAKLE) lie on the Extracellular side of the membrane. Asn-27 carries an N-linked (GlcNAc...) asparagine glycan. Residues 55–75 (IAVLAVIFVVAVLGNSSVLLA) traverse the membrane as a helical segment. Over 76 to 92 (LHRTPRKTSRMHLFIRH) the chain is Cytoplasmic. The chain crosses the membrane as a helical span at residues 93-113 (LSLADLAVAFFQVLPQLCWDI). Residues 114 to 125 (TYRFRGPDWLCR) lie on the Extracellular side of the membrane. Cysteines 124 and 205 form a disulfide. Residues 126–146 (VVKHLQVFAMFASAYMLVVMT) form a helical membrane-spanning segment. Residues 147–168 (ADRYIAVCHPLKTLQQPTRRSR) are Cytoplasmic-facing. The helical transmembrane segment at 169–189 (LMIAASWVLSFLLSTPQYFIF) threads the bilayer. At 190-225 (SMIEIEVNNGTKTQDCWATFIQPWGTRAYVTWMTSG) the chain is on the extracellular side. N-linked (GlcNAc...) asparagine glycosylation is present at Asn-198. A helical membrane pass occupies residues 226-246 (VFVVPVVILGTCYGFICYHIW). The Cytoplasmic portion of the chain corresponds to 247–294 (RNVRGKTASRQSKGSGEDVAPFHKGLLVTPCVSSVKTISRAKIRTVKM). A helical transmembrane segment spans residues 295–315 (TFVIVTAYILCWAPFFIVQMW). Residues 316 to 331 (SVWDDNFIWTDSENPS) are Extracellular-facing. A helical transmembrane segment spans residues 332–352 (ITITALLASLNSCCNPWIYMF). Residues 353–420 (FSGHLLQDCV…RSIRFIPVST (68 aa)) are Cytoplasmic-facing. 2 S-palmitoyl cysteine lipidation sites follow: Cys-367 and Cys-368. The tract at residues 379 to 411 (DSDNMSRRHTSYSNNRSPTNSTGTWKDSPKSSR) is disordered. Over residues 389–403 (SYSNNRSPTNSTGTW) the composition is skewed to polar residues. Ser-406 bears the Phosphoserine mark.

It belongs to the G-protein coupled receptor 1 family. Vasopressin/oxytocin receptor subfamily.

Its subcellular location is the cell membrane. Functionally, receptor for arginine vasopressin. The activity of this receptor is mediated by G proteins which activate a phosphatidyl-inositol-calcium second messenger system. Involved in social memory formation. In Microtus ochrogaster (Prairie vole), this protein is Vasopressin V1a receptor (Avpr1a).